Here is a 589-residue protein sequence, read N- to C-terminus: Oligo-1,6-glucosidase IMA2 (589 aa).

D215 (nucleophile) is an active-site residue. E277 acts as the Proton donor in catalysis.

This sequence belongs to the glycosyl hydrolase 13 family.

The enzyme catalyses Hydrolysis of (1-&gt;6)-alpha-D-glucosidic linkages in some oligosaccharides produced from starch and glycogen by alpha-amylase, and in isomaltose.. Functionally, alpha-glucosidase with specificity for isomaltase, methyl-alpha-glucoside, and palatinose. The chain is Oligo-1,6-glucosidase IMA2 (IMA2) from Saccharomyces cerevisiae (strain ATCC 204508 / S288c) (Baker's yeast).